A 298-amino-acid chain; its full sequence is tRNA uridine(34) hydroxylase (298 aa).

The region spanning 123–217 (QNPDVTLVDT…YLEEIPVAES (95 aa)) is the Rhodanese domain. Catalysis depends on C177, which acts as the Cysteine persulfide intermediate.

It belongs to the TrhO family.

The catalysed reaction is uridine(34) in tRNA + AH2 + O2 = 5-hydroxyuridine(34) in tRNA + A + H2O. In terms of biological role, catalyzes oxygen-dependent 5-hydroxyuridine (ho5U) modification at position 34 in tRNAs. This Picosynechococcus sp. (strain ATCC 27264 / PCC 7002 / PR-6) (Agmenellum quadruplicatum) protein is tRNA uridine(34) hydroxylase.